A 907-amino-acid polypeptide reads, in one-letter code: Gamma-tubulin complex component 3 (907 aa).

Ala-2 bears the N-acetylalanine mark. Position 113 is a phosphoserine (Ser-113). Residues 210-230 (NQPSSQATTSKGVPSAVSRNM) are compositionally biased toward polar residues. A disordered region spans residues 210 to 241 (NQPSSQATTSKGVPSAVSRNMTRSRREGDTGG).

This sequence belongs to the TUBGCP family. As to quaternary structure, component of the gamma-tubulin ring complex (gTuRC) consisting of TUBGCP2, TUBGCP3, TUBGCP4, TUBGCP5 and TUBGCP6 and gamma-tubulin TUBG1 or TUBG2. TUBGCP2, TUBGCP3, TUBGCP4, TUBGCP5 and TUBGCP6 assemble in a 5:5:2:1:1 stoichiometry; each is associated with a gamma-tubulin, thereby arranging 14 gamma-tubulins in a helical manner. Gamma-tubulin at the first position is blocked by TUBGCP3 at the last position, allowing 13 protafilaments to grow into a microtubule. The gTuRC (via TUBGCP3 and TUBGCP6) interacts with ACTB and MZT1; the interactions form a luminal bridge that stabilizes the initial structure during complex assembly. The gTuRC (via TUBGCP2) interacts with MZT2A/MZT2B and CDK5RAP2 (via CM1 motif); the interactions play a role in gTuRC activation. Interacts with NIN (via N-terminus); the interaction may promote recruitment of the gamma-tubulin ring complex to the centrosome. As to expression, ubiquitously expressed.

The protein localises to the cytoplasm. It localises to the cytoskeleton. It is found in the microtubule organizing center. The protein resides in the centrosome. Component of the gamma-tubulin ring complex (gTuRC) which mediates microtubule nucleation. The gTuRC regulates the minus-end nucleation of alpha-beta tubulin heterodimers that grow into microtubule protafilaments, a critical step in centrosome duplication and spindle formation. This is Gamma-tubulin complex component 3 (TUBGCP3) from Homo sapiens (Human).